Consider the following 218-residue polypeptide: Imidazole glycerol phosphate synthase subunit HisH (218 aa).

In terms of domain architecture, Glutamine amidotransferase type-1 spans 5–213 (RLAVIDYEAG…VEFVARCSPL (209 aa)). Catalysis depends on cysteine 83, which acts as the Nucleophile. Residues histidine 188 and glutamate 190 contribute to the active site.

As to quaternary structure, heterodimer of HisH and HisF.

The protein localises to the cytoplasm. It carries out the reaction 5-[(5-phospho-1-deoxy-D-ribulos-1-ylimino)methylamino]-1-(5-phospho-beta-D-ribosyl)imidazole-4-carboxamide + L-glutamine = D-erythro-1-(imidazol-4-yl)glycerol 3-phosphate + 5-amino-1-(5-phospho-beta-D-ribosyl)imidazole-4-carboxamide + L-glutamate + H(+). The catalysed reaction is L-glutamine + H2O = L-glutamate + NH4(+). It functions in the pathway amino-acid biosynthesis; L-histidine biosynthesis; L-histidine from 5-phospho-alpha-D-ribose 1-diphosphate: step 5/9. IGPS catalyzes the conversion of PRFAR and glutamine to IGP, AICAR and glutamate. The HisH subunit catalyzes the hydrolysis of glutamine to glutamate and ammonia as part of the synthesis of IGP and AICAR. The resulting ammonia molecule is channeled to the active site of HisF. This is Imidazole glycerol phosphate synthase subunit HisH from Synechococcus sp. (strain JA-2-3B'a(2-13)) (Cyanobacteria bacterium Yellowstone B-Prime).